The primary structure comprises 219 residues: Antigen 5 like allergen Cul n 1 (219 aa).

Residues 1–19 form the signal peptide; the sequence is MIKKLSIVILFSCISFVLS. 3 disulfides stabilise this stretch: C23-C45, C28-C124, and C55-C117. Positions 73–211 constitute an SCP domain; it reads LKVHNRLRNK…RHSGNKYFFW (139 aa).

This sequence belongs to the CRISP family. Expressed in salivary glands.

The protein localises to the secreted. This is Antigen 5 like allergen Cul n 1 from Culicoides nubeculosus (Biting midge).